A 282-amino-acid polypeptide reads, in one-letter code: Tail needle protein (282 aa).

Positions 2–60 (ADSNLNVPVIIQATRLDTSVLPRNIFSQSYLLYVIAQGTDVGNVANKANEAGQGAYDAQ) are interaction with tail hub protein. Trimerization heptad repeat repeat units lie at residues 61–67 (VRNDEQD), 70–76 (LADHEQR), 77–83 (ISAAEAT), 84–90 (LVNHEER), 91–97 (IRQAEST), 98–104 (LQDHETR), 105–111 (IAQNESD), 112–118 (ISSLDTR), 119–125 (VQSLESQ), 126–132 (VSDHETR), and 133–139 (IDALEYA). Residues 61–139 (VRNDEQDVIL…ETRIDALEYA (79 aa)) are a coiled coil. The C-terminal globular knob stretch occupies residues 132-282 (RIDALEYATT…ATTIKIIAEQ (151 aa)). L-glutamate is bound by residues Glu-146, Lys-200, Ser-248, Asp-250, Leu-255, and Lys-277.

It belongs to the Lederbergvirus tail needle protein family. As to quaternary structure, homotrimer. The trimer forms an elongated coiled-coil (280A x 25A). he N-terminal tip may exist in a pre-ejection extended conformation, which may fold into a trimer of hairpins only after ejection into the host. Interacts with the tail hub. Interacts with the head-to-tail adapter protein.

It is found in the virion. Functionally, cell-perforating component and plug protein of the phage tail machine. Together with the internal ejection proteins is required for stabilization of the condensed DNA within the capsid by plugging the hole through which the DNA enters. Host cell membrane perforation allows viral DNA ejection. The needle penetrates the host outer membrane. The needle is released and the internal head protein gp7 is ejected to form an extra-cellular channel. In Shigella phage Sf6 (Shigella flexneri bacteriophage VI), this protein is Tail needle protein (9).